A 333-amino-acid chain; its full sequence is HTH-type transcriptional repressor PurR (333 aa).

The HTH lacI-type domain occupies 2–56 (ATIKDVAKMAGVSTTTVSHVINKTRFVAKETEQQVLQAIKNLNYSPSAVARSLKV). Residues 4 to 23 (IKDVAKMAGVSTTTVSHVIN) constitute a DNA-binding region (H-T-H motif). A DNA-binding region spans residues 48–56 (SAVARSLKV). Residues Tyr-73, Lys-189, Thr-191, Phe-220, and Asp-274 each coordinate hypoxanthine.

Homodimer.

It participates in purine metabolism; purine nucleotide biosynthesis [regulation]. Is the main repressor of the genes involved in the de novo synthesis of purine nucleotides, regulating purB, purC, purEK, purF, purHD, purL, purMN and guaBA expression. PurR is allosterically activated to bind its cognate DNA by binding the purine corepressors, hypoxanthine or guanine, thereby effecting transcription repression. The polypeptide is HTH-type transcriptional repressor PurR (Histophilus somni (strain 2336) (Haemophilus somnus)).